The following is a 296-amino-acid chain: NADH-cytochrome b5 reductase 2-A (296 aa).

A helical transmembrane segment spans residues phenylalanine 15 to leucine 35. Residues asparagine 47–valine 151 form the FAD-binding FR-type domain. An FAD-binding site is contributed by serine 154–leucine 189.

Belongs to the flavoprotein pyridine nucleotide cytochrome reductase family. It depends on FAD as a cofactor.

It localises to the mitochondrion outer membrane. It carries out the reaction 2 Fe(III)-[cytochrome b5] + NADH = 2 Fe(II)-[cytochrome b5] + NAD(+) + H(+). May mediate the reduction of outer membrane cytochrome b5. The chain is NADH-cytochrome b5 reductase 2-A (MCR1A) from Vanderwaltozyma polyspora (strain ATCC 22028 / DSM 70294 / BCRC 21397 / CBS 2163 / NBRC 10782 / NRRL Y-8283 / UCD 57-17) (Kluyveromyces polysporus).